Reading from the N-terminus, the 496-residue chain is GTPase Der (496 aa).

EngA-type G domains follow at residues 3–166 (PVVA…FDNL) and 208–381 (IKLA…RSAT). GTP is bound by residues 9-16 (GRPNVGKS), 56-60 (DTGGI), 118-121 (NKVD), 214-221 (GRPNVGKS), 261-265 (DTAGV), and 326-329 (NKWD). In terms of domain architecture, KH-like spans 382 to 466 (TRVGTSVLTR…PIRIQFQNSD (85 aa)).

Belongs to the TRAFAC class TrmE-Era-EngA-EngB-Septin-like GTPase superfamily. EngA (Der) GTPase family. As to quaternary structure, associates with the 50S ribosomal subunit.

In terms of biological role, GTPase that plays an essential role in the late steps of ribosome biogenesis. This Vibrio vulnificus (strain CMCP6) protein is GTPase Der.